The following is a 418-amino-acid chain: Triacylglycerol lipase 2 (418 aa).

Residues 1–31 form the signal peptide; sequence MAGSVMVPSVSIGLALSVLIFFALSLKTLEA. N-linked (GlcNAc...) asparagine glycosylation occurs at N158. S190 (nucleophile) is an active-site residue. N-linked (GlcNAc...) asparagine glycans are attached at residues N286 and N342. Residues D360 and H393 each act as charge relay system in the active site.

It belongs to the AB hydrolase superfamily. Lipase family.

It localises to the secreted. The catalysed reaction is a triacylglycerol + H2O = a diacylglycerol + a fatty acid + H(+). Triacylglycerol (TAG) lipase. May be involved for TAG storage breakdown during seed germination. The polypeptide is Triacylglycerol lipase 2 (LIP2) (Arabidopsis thaliana (Mouse-ear cress)).